Here is a 450-residue protein sequence, read N- to C-terminus: Na(+)/H(+) antiporter NhaA 1 (450 aa).

11 consecutive transmembrane segments (helical) span residues 35 to 55 (SSLF…SDYA), 79 to 99 (LKHI…GLEI), 117 to 137 (LIIC…GFNW), 143 to 163 (IGWG…LTMV), 173 to 193 (AFIV…IAIF), 198 to 218 (ISLM…VANY), 224 to 244 (PLFY…SGVH), 320 to 340 (LPVV…VVIN), 356 to 376 (IISG…WFAL), 392 to 412 (VIGA…IATL), and 423 to 443 (VAKT…LLYL).

Belongs to the NhaA Na(+)/H(+) (TC 2.A.33) antiporter family.

It localises to the cell inner membrane. It catalyses the reaction Na(+)(in) + 2 H(+)(out) = Na(+)(out) + 2 H(+)(in). Na(+)/H(+) antiporter that extrudes sodium in exchange for external protons. In Shewanella denitrificans (strain OS217 / ATCC BAA-1090 / DSM 15013), this protein is Na(+)/H(+) antiporter NhaA 1.